The following is a 569-amino-acid chain: Proline--tRNA ligase (569 aa).

Belongs to the class-II aminoacyl-tRNA synthetase family. ProS type 1 subfamily. Homodimer.

It localises to the cytoplasm. It catalyses the reaction tRNA(Pro) + L-proline + ATP = L-prolyl-tRNA(Pro) + AMP + diphosphate. In terms of biological role, catalyzes the attachment of proline to tRNA(Pro) in a two-step reaction: proline is first activated by ATP to form Pro-AMP and then transferred to the acceptor end of tRNA(Pro). As ProRS can inadvertently accommodate and process non-cognate amino acids such as alanine and cysteine, to avoid such errors it has two additional distinct editing activities against alanine. One activity is designated as 'pretransfer' editing and involves the tRNA(Pro)-independent hydrolysis of activated Ala-AMP. The other activity is designated 'posttransfer' editing and involves deacylation of mischarged Ala-tRNA(Pro). The misacylated Cys-tRNA(Pro) is not edited by ProRS. The chain is Proline--tRNA ligase from Latilactobacillus sakei subsp. sakei (strain 23K) (Lactobacillus sakei subsp. sakei).